Consider the following 414-residue polypeptide: Histidine--tRNA ligase (414 aa).

This sequence belongs to the class-II aminoacyl-tRNA synthetase family. In terms of assembly, homodimer.

Its subcellular location is the cytoplasm. The catalysed reaction is tRNA(His) + L-histidine + ATP = L-histidyl-tRNA(His) + AMP + diphosphate + H(+). The sequence is that of Histidine--tRNA ligase from Ehrlichia ruminantium (strain Gardel).